The chain runs to 155 residues: Transcriptional repressor NrdR (155 aa).

A zinc finger spans residues 3-34; it reads CPFCGHSNTQVLDTRMSEDGDAVRRRRRCEAC. The region spanning 49 to 139 is the ATP-cone domain; the sequence is PAIVKKNGSR…VYRSFEDVSE (91 aa).

This sequence belongs to the NrdR family. Zn(2+) is required as a cofactor.

Negatively regulates transcription of bacterial ribonucleotide reductase nrd genes and operons by binding to NrdR-boxes. This is Transcriptional repressor NrdR from Cupriavidus necator (strain ATCC 17699 / DSM 428 / KCTC 22496 / NCIMB 10442 / H16 / Stanier 337) (Ralstonia eutropha).